The sequence spans 1394 residues: DNA-directed RNA polymerase subunit beta' (1394 aa).

Cys-71, Cys-73, Cys-86, and Cys-89 together coordinate Zn(2+). Asp-462, Asp-464, and Asp-466 together coordinate Mg(2+). Zn(2+)-binding residues include Cys-810, Cys-884, Cys-891, and Cys-894.

It belongs to the RNA polymerase beta' chain family. In terms of assembly, the RNAP catalytic core consists of 2 alpha, 1 beta, 1 beta' and 1 omega subunit. When a sigma factor is associated with the core the holoenzyme is formed, which can initiate transcription. The cofactor is Mg(2+). It depends on Zn(2+) as a cofactor.

The enzyme catalyses RNA(n) + a ribonucleoside 5'-triphosphate = RNA(n+1) + diphosphate. Functionally, DNA-dependent RNA polymerase catalyzes the transcription of DNA into RNA using the four ribonucleoside triphosphates as substrates. This Caulobacter sp. (strain K31) protein is DNA-directed RNA polymerase subunit beta'.